The following is a 312-amino-acid chain: Glyceraldehyde-3-phosphate dehydrogenase, cytosolic (312 aa).

NAD(+)-binding positions include 5–6 (RI) and Asp27. D-glyceraldehyde 3-phosphate-binding positions include 144–146 (SCT), Thr175, 204–205 (TG), and Arg227. The Nucleophile role is filled by Cys145. An NAD(+)-binding site is contributed by Asn309.

Belongs to the glyceraldehyde-3-phosphate dehydrogenase family. In terms of assembly, homotetramer.

Its subcellular location is the cytoplasm. It catalyses the reaction D-glyceraldehyde 3-phosphate + phosphate + NAD(+) = (2R)-3-phospho-glyceroyl phosphate + NADH + H(+). Its pathway is carbohydrate degradation; glycolysis; pyruvate from D-glyceraldehyde 3-phosphate: step 1/5. Functionally, key enzyme in glycolysis that catalyzes the first step of the pathway by converting D-glyceraldehyde 3-phosphate (G3P) into 3-phospho-D-glyceroyl phosphate. Essential for the maintenance of cellular ATP levels and carbohydrate metabolism. In Scenedesmus vacuolatus (Green alga), this protein is Glyceraldehyde-3-phosphate dehydrogenase, cytosolic (GapC).